Reading from the N-terminus, the 101-residue chain is Protein Tat (101 aa).

The interval 1 to 20 is disordered; it reads MEPVDPSLEPWKHPGSQPKT. An interaction with human CREBBP region spans residues 1–24; that stretch reads MEPVDPSLEPWKHPGSQPKTACTN. Positions 1 to 48 are transactivation; that stretch reads MEPVDPSLEPWKHPGSQPKTACTNCYCKKCCLHCQVCFTTKGLGISYG. Zn(2+)-binding residues include Cys-22, Cys-25, and Cys-27. Residues 22–37 are cysteine-rich; sequence CTNCYCKKCCLHCQVC. Lys-28 carries the post-translational modification N6-acetyllysine; by host PCAF. Zn(2+)-binding residues include Cys-30, His-33, Cys-34, and Cys-37. A core region spans residues 38 to 48; sequence FTTKGLGISYG. Residues 45-101 are disordered; the sequence is ISYGRKKRRQRRRPPQDSQTHQVSLPKQPSSQQRGDPTGPKESKKKVERETETDPDN. The span at 48 to 57 shows a compositional bias: basic residues; that stretch reads GRKKRRQRRR. A Nuclear localization signal, RNA-binding (TAR), and protein transduction motif is present at residues 49–57; it reads RKKRRQRRR. An interaction with the host capping enzyme RNGTT region spans residues 49 to 86; that stretch reads RKKRRQRRRPPQDSQTHQVSLPKQPSSQQRGDPTGPKE. Lys-50 and Lys-51 each carry N6-acetyllysine; by host EP300 and GCN5L2. 2 positions are modified to asymmetric dimethylarginine; by host PRMT6: Arg-52 and Arg-53. Residues 61 to 79 show a composition bias toward polar residues; it reads DSQTHQVSLPKQPSSQQRG. Lys-71 participates in a covalent cross-link: Glycyl lysine isopeptide (Lys-Gly) (interchain with G-Cter in ubiquitin). A Cell attachment site motif is present at residues 78–80; sequence RGD. Residues 83 to 101 are compositionally biased toward basic and acidic residues; sequence GPKESKKKVERETETDPDN.

The protein belongs to the lentiviruses Tat family. As to quaternary structure, interacts with host CCNT1. Associates with the P-TEFb complex composed at least of Tat, P-TEFb (CDK9 and CCNT1), TAR RNA, RNA Pol II. Recruits the HATs CREBBP, TAF1/TFIID, EP300, PCAF and GCN5L2. Interacts with host KAT5/Tip60; this interaction targets the latter to degradation. Interacts with the host deacetylase SIRT1. Interacts with host capping enzyme RNGTT; this interaction stimulates RNGTT. Binds to host KDR, and to the host integrins ITGAV/ITGB3 and ITGA5/ITGB1. Interacts with host KPNB1/importin beta-1 without previous binding to KPNA1/importin alpha-1. Interacts with EIF2AK2. Interacts with host nucleosome assembly protein NAP1L1; this interaction may be required for the transport of Tat within the nucleus, since the two proteins interact at the nuclear rim. Interacts with host C1QBP/SF2P32; this interaction involves lysine-acetylated Tat. Interacts with the host chemokine receptors CCR2, CCR3 and CXCR4. Interacts with host DPP4/CD26; this interaction may trigger an anti-proliferative effect. Interacts with host LDLR. Interacts with the host extracellular matrix metalloproteinase MMP1. Interacts with host PRMT6; this interaction mediates Tat's methylation. Interacts with, and is ubiquitinated by MDM2/Hdm2. Interacts with host PSMC3 and HTATIP2. Interacts with STAB1; this interaction may overcome SATB1-mediated repression of IL2 and IL2RA (interleukin) in T cells by binding to the same domain than HDAC1. Interacts (when acetylated) with human CDK13, thereby increasing HIV-1 mRNA splicing and promoting the production of the doubly spliced HIV-1 protein Nef. Interacts with host TBP; this interaction modulates the activity of transcriptional pre-initiation complex. Interacts with host RELA. Interacts with host PLSCR1; this interaction negatively regulates Tat transactivation activity by altering its subcellular distribution. Post-translationally, asymmetrical arginine methylation by host PRMT6 seems to diminish the transactivation capacity of Tat and affects the interaction with host CCNT1. Acetylation by EP300, CREBBP, GCN5L2/GCN5 and PCAF regulates the transactivation activity of Tat. EP300-mediated acetylation of Lys-50 promotes dissociation of Tat from the TAR RNA through the competitive binding to PCAF's bromodomain. In addition, the non-acetylated Tat's N-terminus can also interact with PCAF. PCAF-mediated acetylation of Lys-28 enhances Tat's binding to CCNT1. Lys-50 is deacetylated by SIRT1. In terms of processing, polyubiquitination by host MDM2 does not target Tat to degradation, but activates its transactivation function and fosters interaction with CCNT1 and TAR RNA. Post-translationally, phosphorylated by EIF2AK2 on serine and threonine residues adjacent to the basic region important for TAR RNA binding and function. Phosphorylation of Tat by EIF2AK2 is dependent on the prior activation of EIF2AK2 by dsRNA.

The protein localises to the host nucleus. It localises to the host nucleolus. The protein resides in the host cytoplasm. Its subcellular location is the secreted. Transcriptional activator that increases RNA Pol II processivity, thereby increasing the level of full-length viral transcripts. Recognizes a hairpin structure at the 5'-LTR of the nascent viral mRNAs referred to as the transactivation responsive RNA element (TAR) and recruits the cyclin T1-CDK9 complex (P-TEFb complex) that will in turn hyperphosphorylate the RNA polymerase II to allow efficient elongation. The CDK9 component of P-TEFb and other Tat-activated kinases hyperphosphorylate the C-terminus of RNA Pol II that becomes stabilized and much more processive. Other factors such as HTATSF1/Tat-SF1, SUPT5H/SPT5, and HTATIP2 are also important for Tat's function. Besides its effect on RNA Pol II processivity, Tat induces chromatin remodeling of proviral genes by recruiting the histone acetyltransferases (HATs) CREBBP, EP300 and PCAF to the chromatin. This also contributes to the increase in proviral transcription rate, especially when the provirus integrates in transcriptionally silent region of the host genome. To ensure maximal activation of the LTR, Tat mediates nuclear translocation of NF-kappa-B by interacting with host RELA. Through its interaction with host TBP, Tat may also modulate transcription initiation. Tat can reactivate a latently infected cell by penetrating in it and transactivating its LTR promoter. In the cytoplasm, Tat is thought to act as a translational activator of HIV-1 mRNAs. In terms of biological role, extracellular circulating Tat can be endocytosed by surrounding uninfected cells via the binding to several surface receptors such as CD26, CXCR4, heparan sulfate proteoglycans (HSPG) or LDLR. Neurons are rarely infected, but they internalize Tat via their LDLR. Through its interaction with nuclear HATs, Tat is potentially able to control the acetylation-dependent cellular gene expression. Modulates the expression of many cellular genes involved in cell survival, proliferation or in coding for cytokines or cytokine receptors. Tat plays a role in T-cell and neurons apoptosis. Tat induced neurotoxicity and apoptosis probably contribute to neuroAIDS. Circulating Tat also acts as a chemokine-like and/or growth factor-like molecule that binds to specific receptors on the surface of the cells, affecting many cellular pathways. In the vascular system, Tat binds to ITGAV/ITGB3 and ITGA5/ITGB1 integrins dimers at the surface of endothelial cells and competes with bFGF for heparin-binding sites, leading to an excess of soluble bFGF. The chain is Protein Tat from Homo sapiens (Human).